We begin with the raw amino-acid sequence, 256 residues long: Protein CC2D2B homolog (256 aa).

Positions 1–24 (MSEEMDNVTAEEITDKHLQKDLDA) are disordered. Over residues 13–22 (ITDKHLQKDL) the composition is skewed to basic and acidic residues. Coiled-coil stretches lie at residues 136–159 (DLLKVKAADYEDDQEQIKKQKANI) and 194–214 (EIYKKTCNKMENRLLKLEEGK).

In Macaca fascicularis (Crab-eating macaque), this protein is Protein CC2D2B homolog.